Consider the following 234-residue polypeptide: Glucosamine-6-phosphate deaminase (234 aa).

The active-site Proton acceptor; for enolization step is Asp63. The active-site For ring-opening step is the Asn129. His131 (proton acceptor; for ring-opening step) is an active-site residue. Glu136 functions as the For ring-opening step in the catalytic mechanism.

This sequence belongs to the glucosamine/galactosamine-6-phosphate isomerase family. NagB subfamily.

It carries out the reaction alpha-D-glucosamine 6-phosphate + H2O = beta-D-fructose 6-phosphate + NH4(+). Its pathway is amino-sugar metabolism; N-acetylneuraminate degradation; D-fructose 6-phosphate from N-acetylneuraminate: step 5/5. Functionally, catalyzes the reversible isomerization-deamination of glucosamine 6-phosphate (GlcN6P) to form fructose 6-phosphate (Fru6P) and ammonium ion. This Listeria innocua serovar 6a (strain ATCC BAA-680 / CLIP 11262) protein is Glucosamine-6-phosphate deaminase.